A 101-amino-acid chain; its full sequence is Putative pterin-4-alpha-carbinolamine dehydratase (101 aa).

The protein belongs to the pterin-4-alpha-carbinolamine dehydratase family.

The catalysed reaction is (4aS,6R)-4a-hydroxy-L-erythro-5,6,7,8-tetrahydrobiopterin = (6R)-L-erythro-6,7-dihydrobiopterin + H2O. The protein is Putative pterin-4-alpha-carbinolamine dehydratase of Nitrobacter winogradskyi (strain ATCC 25391 / DSM 10237 / CIP 104748 / NCIMB 11846 / Nb-255).